Here is a 273-residue protein sequence, read N- to C-terminus: Bifunctional protein FolD (273 aa).

Residues 149-151 (GLG) and Val-215 contribute to the NADP(+) site.

Belongs to the tetrahydrofolate dehydrogenase/cyclohydrolase family. In terms of assembly, homodimer.

It catalyses the reaction (6R)-5,10-methylene-5,6,7,8-tetrahydrofolate + NADP(+) = (6R)-5,10-methenyltetrahydrofolate + NADPH. It carries out the reaction (6R)-5,10-methenyltetrahydrofolate + H2O = (6R)-10-formyltetrahydrofolate + H(+). Its pathway is one-carbon metabolism; tetrahydrofolate interconversion. In terms of biological role, catalyzes the oxidation of 5,10-methylenetetrahydrofolate to 5,10-methenyltetrahydrofolate and then the hydrolysis of 5,10-methenyltetrahydrofolate to 10-formyltetrahydrofolate. The protein is Bifunctional protein FolD of Mycoplasma genitalium (strain ATCC 33530 / DSM 19775 / NCTC 10195 / G37) (Mycoplasmoides genitalium).